The primary structure comprises 255 residues: Placenta-expressed transcript 1 protein (255 aa).

An N-terminal signal peptide occupies residues 1–26 (MPALRTLLPHLGLFLCLALCFSPSFS). Asparagine 57, asparagine 67, and asparagine 126 each carry an N-linked (GlcNAc...) asparagine glycan. Serine 236 carries GPI-anchor amidated serine lipidation. Positions 237–255 (PLAGALHILLVFLISKLLF) are cleaved as a propeptide — removed in mature form.

N-glycosylated. Post-translationally, GPI-anchored.

It localises to the apical cell membrane. In terms of biological role, modulates leading keratinocyte migration and cellular adhesion to matrix proteins during a wound-healing response and promotes wound repair. May play a role during trichilemmal differentiation of the hair follicle. This is Placenta-expressed transcript 1 protein (Plet1) from Rattus norvegicus (Rat).